Here is a 430-residue protein sequence, read N- to C-terminus: Adenylosuccinate synthetase (430 aa).

GTP-binding positions include 12–18 (GDEGKGK) and 40–42 (GHT). The active-site Proton acceptor is aspartate 13. Mg(2+) contacts are provided by aspartate 13 and glycine 40. IMP-binding positions include 13-16 (DEGK), 38-41 (NAGH), threonine 130, arginine 144, glutamine 224, threonine 239, and arginine 303. The Proton donor role is filled by histidine 41. 299–305 (TVTGRKR) is a substrate binding site. Residues arginine 305, 331–333 (KLD), and 413–415 (STS) each bind GTP.

Belongs to the adenylosuccinate synthetase family. As to quaternary structure, homodimer. Requires Mg(2+) as cofactor.

The protein localises to the cytoplasm. The catalysed reaction is IMP + L-aspartate + GTP = N(6)-(1,2-dicarboxyethyl)-AMP + GDP + phosphate + 2 H(+). It participates in purine metabolism; AMP biosynthesis via de novo pathway; AMP from IMP: step 1/2. Plays an important role in the de novo pathway of purine nucleotide biosynthesis. Catalyzes the first committed step in the biosynthesis of AMP from IMP. The chain is Adenylosuccinate synthetase from Cereibacter sphaeroides (strain ATCC 17023 / DSM 158 / JCM 6121 / CCUG 31486 / LMG 2827 / NBRC 12203 / NCIMB 8253 / ATH 2.4.1.) (Rhodobacter sphaeroides).